A 208-amino-acid polypeptide reads, in one-letter code: Hemocyanin, units E and F (208 aa).

H1 is a binding site for Cu cation. Residues H1–L74 are unit E. The cysteines at positions 7 and 18 are disulfide-linked. The 2'-(S-cysteinyl)-histidine (Cys-His) cross-link spans C19–H21. N43 carries an N-linked (GlcNAc...) asparagine glycan. The unit F stretch occupies residues V75–T208. H113 contacts Cu cation. C119 and C130 form a disulfide bridge. The 2'-(S-cysteinyl)-histidine (Cys-His) cross-link spans C131–H133. Residues H133 and H142 each contribute to the Cu cation site.

Belongs to the tyrosinase family. Hemocyanin subfamily. As to quaternary structure, decamers of large identical subunits (390 kDa), each containing 8 globular oxygen-binding functional units. Requires Cu(2+) as cofactor.

Its function is as follows. Hemocyanins are copper-containing oxygen carriers occurring freely dissolved in the hemolymph of many mollusks and arthropods. The polypeptide is Hemocyanin, units E and F (Sepia officinalis (Common cuttlefish)).